Reading from the N-terminus, the 436-residue chain is Exodeoxyribonuclease 7 large subunit (436 aa).

The disordered stretch occupies residues 412-436 (PGGVMNKNSNTTDSTDNTENGTGEA). Residues 417–436 (NKNSNTTDSTDNTENGTGEA) are compositionally biased toward low complexity.

This sequence belongs to the XseA family. In terms of assembly, heterooligomer composed of large and small subunits.

The protein localises to the cytoplasm. The catalysed reaction is Exonucleolytic cleavage in either 5'- to 3'- or 3'- to 5'-direction to yield nucleoside 5'-phosphates.. Bidirectionally degrades single-stranded DNA into large acid-insoluble oligonucleotides, which are then degraded further into small acid-soluble oligonucleotides. The polypeptide is Exodeoxyribonuclease 7 large subunit (Corynebacterium jeikeium (strain K411)).